The primary structure comprises 130 residues: Small ribosomal subunit protein uS8 (130 aa).

The protein belongs to the universal ribosomal protein uS8 family. As to quaternary structure, part of the 30S ribosomal subunit. Contacts proteins S5 and S12.

In terms of biological role, one of the primary rRNA binding proteins, it binds directly to 16S rRNA central domain where it helps coordinate assembly of the platform of the 30S subunit. This Shewanella frigidimarina (strain NCIMB 400) protein is Small ribosomal subunit protein uS8.